The primary structure comprises 75 residues: UPF0346 protein LSL_0716 (75 aa).

The protein belongs to the UPF0346 family.

This chain is UPF0346 protein LSL_0716, found in Ligilactobacillus salivarius (strain UCC118) (Lactobacillus salivarius).